The chain runs to 129 residues: Phosphoribosyl-AMP cyclohydrolase (129 aa).

Aspartate 82 is a binding site for Mg(2+). Cysteine 83 is a binding site for Zn(2+). Mg(2+) contacts are provided by aspartate 84 and aspartate 86. Zn(2+) contacts are provided by cysteine 99 and cysteine 106.

It belongs to the PRA-CH family. As to quaternary structure, homodimer. The cofactor is Mg(2+). Zn(2+) serves as cofactor.

The protein localises to the cytoplasm. It carries out the reaction 1-(5-phospho-beta-D-ribosyl)-5'-AMP + H2O = 1-(5-phospho-beta-D-ribosyl)-5-[(5-phospho-beta-D-ribosylamino)methylideneamino]imidazole-4-carboxamide. Its pathway is amino-acid biosynthesis; L-histidine biosynthesis; L-histidine from 5-phospho-alpha-D-ribose 1-diphosphate: step 3/9. Its function is as follows. Catalyzes the hydrolysis of the adenine ring of phosphoribosyl-AMP. The protein is Phosphoribosyl-AMP cyclohydrolase of Methanosarcina barkeri (strain Fusaro / DSM 804).